The chain runs to 219 residues: MSNHPYSPRDLILPDFTPNLRSVSDVHAWNGAATFLVMYGIWVLAGRSSLKLSKTDKWLMIWWAVSGLIHIIHEGYWLFSPEFYKDKSGNYFAEVWKEYCKGDSRYASRHSAVVGIEGIAVIIVGPASLFAVYAIAKGKSYSYILQLALALVQFYGSTLYFITAFLEGDNFAMDRDHYYKYFIAQGGTWLLFPALIIIRCWKKISAACEFQDQKKAKFY.

Helical transmembrane passes span 26–46, 59–79, 112–132, 144–164, and 178–198; these read VHAW…VLAG, LMIW…YWLF, AVVG…LFAV, ILQL…FITA, and YYKY…LIII. The EXPERA domain occupies 55 to 197; the sequence is TDKWLMIWWA…TWLLFPALII (143 aa).

This sequence belongs to the EBP family.

The protein resides in the membrane. The enzyme catalyses 7,8-epoxymelianol = protoglabretal. It functions in the pathway secondary metabolite biosynthesis; terpenoid biosynthesis. Its function is as follows. Isomerase involved in the biosynthesis of glabretanes triterpene natural products such as glabretal, a component with in vitro antiproliferative properties on lymphocytes. Catalyzes the conversion of 7,8-epoxymelianol to protoglabretal via skeletal rearrangements. This is Protoglabretal synthase ISM2 from Ailanthus altissima (Tree-of-heaven).